We begin with the raw amino-acid sequence, 358 residues long: Plancitoxin-1 (358 aa).

An N-terminal signal peptide occupies residues 1 to 26; sequence MPSSVIMFTFLALTVLTAVMVGTSEA. An N-linked (GlcNAc...) asparagine glycan is attached at Asn274. His303 is a catalytic residue.

It belongs to the DNase II family. Plancitoxin is a heterodimer of alpha and beta subunits; disulfide-linked by a single disulfide bond. Venom gland.

It is found in the secreted. It catalyses the reaction Endonucleolytic cleavage to nucleoside 3'-phosphates and 3'-phosphooligonucleotide end-products.. Its function is as follows. Hydrolyzes DNA with an optimum pH of 7.2. Is potently hepatotoxic. It induces caspase-independent apoptosis (on rat liver cells) through the following procedure: binding to a specific receptor in the cytoplasmic membrane, entering the cell, entering the nucleus and degrading DNA. The chain is Plancitoxin-1 from Acanthaster planci (Crown-of-thorns starfish).